The primary structure comprises 572 residues: Pentatricopeptide repeat-containing protein At5g15010, mitochondrial (572 aa).

The N-terminal 57 residues, 1-57 (MRGIFLIRSRLSIFRAPAVKCLRFSNVLPSLSNNCIVRLYMEPPVACVLPLGLCSMF), are a transit peptide targeting the mitochondrion. PPR repeat units follow at residues 160-194 (SVRE…SPSL), 196-230 (NSQT…KLEM), 231-261 (GIDD…NKDK), 265-300 (DAKS…GVKH), 301-335 (DVVS…CIEP), 336-371 (DRKV…GIEP), 372-406 (NVVT…GLFP), 412-438 (HAFM…GCEP), 439-473 (TVET…TVGP), and 474-508 (DLSS…GMRP).

Belongs to the PPR family. P subfamily.

It is found in the mitochondrion. The chain is Pentatricopeptide repeat-containing protein At5g15010, mitochondrial from Arabidopsis thaliana (Mouse-ear cress).